The primary structure comprises 463 residues: L-seryl-tRNA(Sec) selenium transferase (463 aa).

An N6-(pyridoxal phosphate)lysine modification is found at Lys-295.

The protein belongs to the SelA family. Homodecamer; pentamer of dimers. Binds only one seryl-tRNA(Sec) per dimer. The cofactor is pyridoxal 5'-phosphate.

The protein localises to the cytoplasm. It catalyses the reaction L-seryl-tRNA(Sec) + selenophosphate + H(+) = L-selenocysteinyl-tRNA(Sec) + phosphate. It participates in aminoacyl-tRNA biosynthesis; selenocysteinyl-tRNA(Sec) biosynthesis; selenocysteinyl-tRNA(Sec) from L-seryl-tRNA(Sec) (bacterial route): step 1/1. In terms of biological role, converts seryl-tRNA(Sec) to selenocysteinyl-tRNA(Sec) required for selenoprotein biosynthesis. In Shigella sonnei (strain Ss046), this protein is L-seryl-tRNA(Sec) selenium transferase.